A 164-amino-acid polypeptide reads, in one-letter code: Arginine repressor (164 aa).

The protein belongs to the ArgR family.

The protein localises to the cytoplasm. The protein operates within amino-acid biosynthesis; L-arginine biosynthesis [regulation]. Its function is as follows. Regulates arginine biosynthesis genes. This Mycobacterium avium (strain 104) protein is Arginine repressor.